Reading from the N-terminus, the 294-residue chain is 4-hydroxy-tetrahydrodipicolinate synthase (294 aa).

Thr45 is a binding site for pyruvate. The active-site Proton donor/acceptor is the Tyr133. Lys161 functions as the Schiff-base intermediate with substrate in the catalytic mechanism. Ile203 contributes to the pyruvate binding site.

The protein belongs to the DapA family. In terms of assembly, homotetramer; dimer of dimers.

The protein resides in the cytoplasm. It carries out the reaction L-aspartate 4-semialdehyde + pyruvate = (2S,4S)-4-hydroxy-2,3,4,5-tetrahydrodipicolinate + H2O + H(+). It participates in amino-acid biosynthesis; L-lysine biosynthesis via DAP pathway; (S)-tetrahydrodipicolinate from L-aspartate: step 3/4. Catalyzes the condensation of (S)-aspartate-beta-semialdehyde [(S)-ASA] and pyruvate to 4-hydroxy-tetrahydrodipicolinate (HTPA). The chain is 4-hydroxy-tetrahydrodipicolinate synthase from Shewanella sp. (strain MR-7).